The primary structure comprises 390 residues: Nucleosome assembly protein 1-like 1 (390 aa).

Over residues 1–10 (MADIDNKEQS) the composition is skewed to basic and acidic residues. The tract at residues 1–32 (MADIDNKEQSELDQDLEDVEEVEEEETGEETK) is disordered. Alanine 2 carries the post-translational modification N-acetylalanine. Position 10 is a phosphoserine (serine 10). The span at 11–28 (ELDQDLEDVEEVEEEETG) shows a compositional bias: acidic residues. Threonine 62 and threonine 64 each carry phosphothreonine. A Phosphoserine modification is found at serine 69. At lysine 116 the chain carries N6-acetyllysine. An NAP1L motif motif is present at residues 125 to 150 (YEPTEEECEWKPDEEDEVSEELKEKA). The segment covering 131 to 143 (ECEWKPDEEDEVS) has biased composition (acidic residues). A disordered region spans residues 131 to 163 (ECEWKPDEEDEVSEELKEKAKIEDEKKDEEKED). Serine 143 bears the Phosphoserine mark. Residues 144–163 (EELKEKAKIEDEKKDEEKED) are compositionally biased toward basic and acidic residues. Residues 272 to 278 (IKKKQKH) carry the Nuclear localization signal motif. Positions 345-375 (AIEDDDDDYDEEGEEADEEGEEEGDEENDPD) are enriched in acidic residues. Residues 345 to 390 (AIEDDDDDYDEEGEEADEEGEEEGDEENDPDYDPKKDQNPAECKQQ) are disordered. 2 positions are modified to 5-glutamyl polyglycine: glutamate 358 and glutamate 359. The segment covering 376–390 (YDPKKDQNPAECKQQ) has biased composition (basic and acidic residues). Cysteine 387 carries the cysteine methyl ester modification. Cysteine 387 carries the S-farnesyl cysteine lipid modification. Positions 388 to 390 (KQQ) are cleaved as a propeptide — removed in mature form.

Belongs to the nucleosome assembly protein (NAP) family. In terms of assembly, homodimer. The dimer binds strongly and sequentially to single and double H2A-H2B heterodimers. Interacts with ERCC6; this interaction increases ERCC6 processivity. Interacts with RAD54. Interacts with SETD1A. In terms of processing, polyglycylated by TTLL10 on glutamate residues, resulting in polyglycine chains on the gamma-carboxyl group. Both polyglutamylation and polyglycylation modifications can coexist on the same protein on adjacent residues, and lowering polyglycylation levels increases polyglutamylation, and reciprocally. Post-translationally, polyglutamylated by TTLL4 on glutamate residues, resulting in polyglutamate chains on the gamma-carboxyl group. Both polyglutamylation and polyglycylation modifications can coexist on the same protein on adjacent residues, and lowering polyglycylation levels increases polyglutamylation, and reciprocally.

It localises to the nucleus. The protein resides in the melanosome. The protein localises to the cytoplasm. Histone chaperone that plays a role in the nuclear import of H2A-H2B and nucleosome assembly. Also participates in several important DNA repair mechanisms: greatly enhances ERCC6-mediated chromatin remodeling which is essential for transcription-coupled nucleotide excision DNA repair. Also stimulates homologous recombination (HR) by RAD51 and RAD54 which is essential in mitotic DNA double strand break (DSB) repair. Plays a key role in the regulation of embryonic neurogenesis. Promotes the proliferation of neural progenitors and inhibits neuronal differentiation during cortical development. Regulates neurogenesis via the modulation of RASSF10; regulates RASSF10 expression by promoting SETD1A-mediated H3K4 methylation at the RASSF10 promoter. This is Nucleosome assembly protein 1-like 1 (Nap1l1) from Rattus norvegicus (Rat).